Consider the following 503-residue polypeptide: Transcription termination/antitermination protein NusA (503 aa).

The 65-residue stretch at 139 to 203 (GEIINGIVKR…KGPQIFLSRV (65 aa)) folds into the S1 motif domain. In terms of domain architecture, KH spans 308 to 378 (RHKVEVVVSQ…LDVEEVIGQL (71 aa)).

Belongs to the NusA family. In terms of assembly, monomer. Binds directly to the core enzyme of the DNA-dependent RNA polymerase and to nascent RNA.

Its subcellular location is the cytoplasm. Participates in both transcription termination and antitermination. The polypeptide is Transcription termination/antitermination protein NusA (Rickettsia conorii (strain ATCC VR-613 / Malish 7)).